The sequence spans 206 residues: Probable peptidyl-tRNA hydrolase (206 aa).

Residue H48 is the Proton acceptor of the active site. Y83, N85, and N137 together coordinate tRNA.

It belongs to the PTH family.

The protein localises to the mitochondrion. It carries out the reaction an N-acyl-L-alpha-aminoacyl-tRNA + H2O = an N-acyl-L-amino acid + a tRNA + H(+). Peptidyl-tRNA hydrolase involved in the recycling of tRNA-Lys from diacetyl-lysyl-tRNA-Lys and is important for mitochondrial function. This Schizosaccharomyces pombe (strain 972 / ATCC 24843) (Fission yeast) protein is Probable peptidyl-tRNA hydrolase (pth1).